The following is a 74-amino-acid chain: MEKQNIIEMEGVITESLPNAMFRVHLDNGFDVLAHISGKIRRNYIRILPGDRVKIEMTPYDLTKGRITYRLRKR.

The S1-like domain maps to 1-72; that stretch reads MEKQNIIEME…TKGRITYRLR (72 aa).

This sequence belongs to the IF-1 family. In terms of assembly, component of the 30S ribosomal translation pre-initiation complex which assembles on the 30S ribosome in the order IF-2 and IF-3, IF-1 and N-formylmethionyl-tRNA(fMet); mRNA recruitment can occur at any time during PIC assembly.

The protein localises to the plastid. It is found in the chloroplast. In terms of biological role, one of the essential components for the initiation of protein synthesis. Stabilizes the binding of IF-2 and IF-3 on the 30S subunit to which N-formylmethionyl-tRNA(fMet) subsequently binds. Helps modulate mRNA selection, yielding the 30S pre-initiation complex (PIC). Upon addition of the 50S ribosomal subunit IF-1, IF-2 and IF-3 are released leaving the mature 70S translation initiation complex. The chain is Translation initiation factor IF-1, chloroplastic from Chlorokybus atmophyticus (Soil alga).